Consider the following 79-residue polypeptide: ATP synthase subunit c (79 aa).

2 helical membrane passes run 11–31 (ISAA…IGIL) and 55–75 (IVMG…LYLI).

Belongs to the ATPase C chain family. In terms of assembly, F-type ATPases have 2 components, F(1) - the catalytic core - and F(0) - the membrane proton channel. F(1) has five subunits: alpha(3), beta(3), gamma(1), delta(1), epsilon(1). F(0) has three main subunits: a(1), b(2) and c(10-14). The alpha and beta chains form an alternating ring which encloses part of the gamma chain. F(1) is attached to F(0) by a central stalk formed by the gamma and epsilon chains, while a peripheral stalk is formed by the delta and b chains.

Its subcellular location is the cell membrane. Functionally, f(1)F(0) ATP synthase produces ATP from ADP in the presence of a proton or sodium gradient. F-type ATPases consist of two structural domains, F(1) containing the extramembraneous catalytic core and F(0) containing the membrane proton channel, linked together by a central stalk and a peripheral stalk. During catalysis, ATP synthesis in the catalytic domain of F(1) is coupled via a rotary mechanism of the central stalk subunits to proton translocation. Key component of the F(0) channel; it plays a direct role in translocation across the membrane. A homomeric c-ring of between 10-14 subunits forms the central stalk rotor element with the F(1) delta and epsilon subunits. In Wigglesworthia glossinidia brevipalpis, this protein is ATP synthase subunit c.